The following is a 241-amino-acid chain: Purine nucleoside phosphorylase DeoD-type 1 (241 aa).

His5 lines the a purine D-ribonucleoside pocket. Residues Gly21, Arg25, Arg44, and 88–91 (RVGS) contribute to the phosphate site. A purine D-ribonucleoside contacts are provided by residues 180-182 (EME) and 204-205 (SD). The active-site Proton donor is Asp205.

Belongs to the PNP/UDP phosphorylase family. In terms of assembly, homohexamer; trimer of homodimers.

It carries out the reaction a purine D-ribonucleoside + phosphate = a purine nucleobase + alpha-D-ribose 1-phosphate. It catalyses the reaction a purine 2'-deoxy-D-ribonucleoside + phosphate = a purine nucleobase + 2-deoxy-alpha-D-ribose 1-phosphate. Functionally, catalyzes the reversible phosphorolytic breakdown of the N-glycosidic bond in the beta-(deoxy)ribonucleoside molecules, with the formation of the corresponding free purine bases and pentose-1-phosphate. The chain is Purine nucleoside phosphorylase DeoD-type 1 from Photobacterium profundum (strain SS9).